The sequence spans 273 residues: Large ribosomal subunit protein uL2 (273 aa).

Residues 228-273 (VDHPHGGGEGKTSGGRHPVTPWGFPTKGKKTRKNKRTSKFIIKKRK) form a disordered region. The segment covering 254–273 (KGKKTRKNKRTSKFIIKKRK) has biased composition (basic residues).

The protein belongs to the universal ribosomal protein uL2 family. In terms of assembly, part of the 50S ribosomal subunit. Forms a bridge to the 30S subunit in the 70S ribosome.

Functionally, one of the primary rRNA binding proteins. Required for association of the 30S and 50S subunits to form the 70S ribosome, for tRNA binding and peptide bond formation. It has been suggested to have peptidyltransferase activity; this is somewhat controversial. Makes several contacts with the 16S rRNA in the 70S ribosome. The sequence is that of Large ribosomal subunit protein uL2 from Rickettsia bellii (strain OSU 85-389).